Consider the following 264-residue polypeptide: Complement C1q tumor necrosis factor-related protein 6 (264 aa).

The N-terminal stretch at 1–24 (MRVIMGIASLGFLWAVFLLPLVFG) is a signal peptide. Asparagine 77 is a glycosylation site (N-linked (GlcNAc...) asparagine). Positions 81–125 (LKGDKGDRGPTGTPGKPGKNGTRGDRGSQGVKGDKGQAGSPGSSC) are disordered. A Collagen-like domain is found at 83 to 124 (GDKGDRGPTGTPGKPGKNGTRGDRGSQGVKGDKGQAGSPGSS). Low complexity predominate over residues 90–100 (PTGTPGKPGKN). In terms of domain architecture, C1q spans 125–264 (CQTHYSAFSV…SGHLIKAEDN (140 aa)).

The protein localises to the secreted. The polypeptide is Complement C1q tumor necrosis factor-related protein 6 (C1qtnf6) (Mus musculus (Mouse)).